The chain runs to 492 residues: ATP synthase subunit beta, chloroplastic (492 aa).

Residue 170–177 (GGAGVGKT) coordinates ATP.

Belongs to the ATPase alpha/beta chains family. In terms of assembly, F-type ATPases have 2 components, CF(1) - the catalytic core - and CF(0) - the membrane proton channel. CF(1) has five subunits: alpha(3), beta(3), gamma(1), delta(1), epsilon(1). CF(0) has four main subunits: a(1), b(1), b'(1) and c(9-12).

The protein localises to the plastid. The protein resides in the chloroplast thylakoid membrane. It catalyses the reaction ATP + H2O + 4 H(+)(in) = ADP + phosphate + 5 H(+)(out). Functionally, produces ATP from ADP in the presence of a proton gradient across the membrane. The catalytic sites are hosted primarily by the beta subunits. The polypeptide is ATP synthase subunit beta, chloroplastic (Pinus thunbergii (Japanese black pine)).